A 413-amino-acid polypeptide reads, in one-letter code: Aspartate aminotransferase, cytoplasmic (413 aa).

2 residues coordinate L-aspartate: Gly-39 and Trp-141. Ser-149 is subject to Phosphoserine. Asn-195 provides a ligand contact to L-aspartate. Lys-259 carries the N6-(pyridoxal phosphate)lysine modification. An L-aspartate-binding site is contributed by Arg-387.

It belongs to the class-I pyridoxal-phosphate-dependent aminotransferase family. In terms of assembly, homodimer. It depends on pyridoxal 5'-phosphate as a cofactor.

Its subcellular location is the cytoplasm. The catalysed reaction is L-aspartate + 2-oxoglutarate = oxaloacetate + L-glutamate. It catalyses the reaction L-cysteine + 2-oxoglutarate = 2-oxo-3-sulfanylpropanoate + L-glutamate. The enzyme catalyses (2S)-2-aminobutanoate + 2-oxoglutarate = 2-oxobutanoate + L-glutamate. It carries out the reaction 3-sulfino-L-alanine + 2-oxoglutarate = 3-sulfinopyruvate + L-glutamate. Its function is as follows. Biosynthesis of L-glutamate from L-aspartate or L-cysteine. Important regulator of levels of glutamate, the major excitatory neurotransmitter of the vertebrate central nervous system. Acts as a scavenger of glutamate in brain neuroprotection. The aspartate aminotransferase activity is involved in hepatic glucose synthesis during development and in adipocyte glyceroneogenesis. Using L-cysteine as substrate, regulates levels of mercaptopyruvate, an important source of hydrogen sulfide. Mercaptopyruvate is converted into H(2)S via the action of 3-mercaptopyruvate sulfurtransferase (3MST). Hydrogen sulfide is an important synaptic modulator and neuroprotectant in the brain. The chain is Aspartate aminotransferase, cytoplasmic from Pan troglodytes (Chimpanzee).